The chain runs to 285 residues: NAD kinase (285 aa).

Asp-66 (proton acceptor) is an active-site residue. NAD(+) is bound by residues 66–67 (DG), 137–138 (ND), Arg-148, Arg-165, Asp-167, and 178–183 (TAYSLS).

This sequence belongs to the NAD kinase family. The cofactor is a divalent metal cation.

It localises to the cytoplasm. It carries out the reaction NAD(+) + ATP = ADP + NADP(+) + H(+). Functionally, involved in the regulation of the intracellular balance of NAD and NADP, and is a key enzyme in the biosynthesis of NADP. Catalyzes specifically the phosphorylation on 2'-hydroxyl of the adenosine moiety of NAD to yield NADP. The polypeptide is NAD kinase (Prosthecochloris aestuarii (strain DSM 271 / SK 413)).